A 968-amino-acid polypeptide reads, in one-letter code: Alanine--tRNA ligase, cytoplasmic (968 aa).

Residue methionine 1 is modified to N-acetylmethionine. 2 positions are modified to phosphoserine: serine 3 and serine 8. Lysine 19 carries the N6-acetyllysine modification. Residues arginine 77, histidine 95, tryptophan 176, and 214-216 (IWN) contribute to the ATP site. Positions 216 and 239 each coordinate L-alanine. Glycine 243 is a binding site for ATP. Residues serine 399 and serine 555 each carry the phosphoserine modification. Residues histidine 605, histidine 609, cysteine 723, and histidine 727 each contribute to the Zn(2+) site. Residues 750-763 (RRIVAVTGAEAQKA) carry the Nuclear localization signal motif. Lysine 876 carries the N6-acetyllysine modification. Lysine 943 carries the N6,N6,N6-trimethyllysine; alternate modification. The residue at position 943 (lysine 943) is an N6,N6-dimethyllysine; alternate. An N6-methyllysine; alternate modification is found at lysine 943.

The protein belongs to the class-II aminoacyl-tRNA synthetase family. Monomer. Interacts with ANKRD16; the interaction is direct. Zn(2+) is required as a cofactor. Post-translationally, ISGylated. Methylation at 'Lys-943' by METTL21C.

The protein resides in the cytoplasm. The protein localises to the nucleus. The catalysed reaction is tRNA(Ala) + L-alanine + ATP = L-alanyl-tRNA(Ala) + AMP + diphosphate. It catalyses the reaction (S)-lactate + ATP + H(+) = (S)-lactoyl-AMP + diphosphate. It carries out the reaction (S)-lactoyl-AMP + L-lysyl-[protein] = N(6)-[(S)-lactoyl]-L-lysyl-[protein] + AMP + 2 H(+). With respect to regulation, the protein lactyltransferase activity is inhibited by beta-alanine. Functionally, catalyzes the attachment of alanine to tRNA(Ala) in a two-step reaction: alanine is first activated by ATP to form Ala-AMP and then transferred to the acceptor end of tRNA(Ala). Also edits incorrectly charged tRNA(Ala) via its editing domain. In presence of high levels of lactate, also acts as a protein lactyltransferase that mediates lactylation of lysine residues in target proteins, such as TEAD1, TP53/p53 and YAP1. Protein lactylation takes place in a two-step reaction: lactate is first activated by ATP to form lactate-AMP and then transferred to lysine residues of target proteins. Acts as an inhibitor of TP53/p53 activity by catalyzing lactylation of TP53/p53. Acts as a positive regulator of the Hippo pathway by mediating lactylation of TEAD1 and YAP1. This is Alanine--tRNA ligase, cytoplasmic (AARS1) from Pongo abelii (Sumatran orangutan).